The following is a 614-amino-acid chain: Zinc metalloproteinase-disintegrin-like VLAIP-B (614 aa).

The N-terminal stretch at 1–20 (MMQVLLVTICLAVFPYQGSS) is a signal peptide. A propeptide spanning residues 21–193 (IILESGNVND…KASQLNLTPE (173 aa)) is cleaved from the precursor. Pyrrolidone carboxylic acid is present on Q194. Residues 202–398 (KYVELVIVAD…KMPQCILNKP (197 aa)) form the Peptidase M12B domain. E205 is a Ca(2+) binding site. N262 carries an N-linked (GlcNAc...) asparagine glycan. D289 is a Ca(2+) binding site. 3 cysteine pairs are disulfide-bonded: C313-C393, C353-C377, and C355-C360. H338 provides a ligand contact to Zn(2+). The active site involves E339. Zn(2+) is bound by residues H342 and H348. Ca(2+)-binding residues include C393, N396, V408, N411, F413, E415, E418, and D421. Residues 406–492 (PAVCGNYFVE…ECPTDQFQRN (87 aa)) form the Disintegrin domain. 14 disulfides stabilise this stretch: C409–C438, C420–C433, C422–C428, C432–C455, C446–C452, C451–C477, C464–C484, C471–C503, C496–C508, C515–C565, C530–C576, C543–C553, C560–C602, and C596–C607. The short motif at 470-472 (ECD) is the D/ECD-tripeptide element. N505, N547, and N568 each carry an N-linked (GlcNAc...) asparagine glycan.

It belongs to the venom metalloproteinase (M12B) family. P-III subfamily. P-IIIc sub-subfamily. As to quaternary structure, heterodimer; disulfide-linked. It depends on Zn(2+) as a cofactor. The N-terminus is blocked. In terms of tissue distribution, expressed by the venom gland.

The protein resides in the secreted. Inhibited by EDTA or 1,10-phenanthroline. Not inhibited by PMSF. In terms of biological role, this metalloproteinase hydrolyzes azocasein, and insulin B-chain (at the '38-Ala-|-Leu-39' bond). Also hydrolyzes the Aalpha-chain (FGA) and more slowly the Bbeta-chain of fibrinogen (FGB), without affecting the gamma-chain. Cleaves alpha-chain of fibrinogen at '432-Lys-|-Leu-433' and '535-Pro-|-Met-536' bonds. Does not cleave fibrin. Inhibits endothelial cell adhesion to extracellular matrix proteins such as fibrinogen, fibronectin, vitronectin, collagen I, and collagen IV. Induces apoptosis in vascular endothelial cells. The protein is Zinc metalloproteinase-disintegrin-like VLAIP-B of Macrovipera lebetinus (Levantine viper).